Here is a 640-residue protein sequence, read N- to C-terminus: Putative solute carrier organic anion transporter family member 1B7 (640 aa).

The Extracellular segment spans residues 1 to 16; it reads MKISTTQIERRFEISS. The helical transmembrane segment at 17–37 threads the bilayer; that stretch reads SLVGLIDGSFEIGNLFVIVFV. The Cytoplasmic segment spans residues 38–49; that stretch reads SYFGSKLHRPKL. A helical membrane pass occupies residues 50–70; that stretch reads IGIGCFLMGTGSILMALPHFF. Residues 71 to 123 lie on the Extracellular side of the membrane; sequence MGYYRYSKETNIDPSENSTSNLPNCLINQMLSLNRTPSEIIERGCVKESGSHM. A helical transmembrane segment spans residues 124–144; sequence WIYVFMGNMLRGIGETPIVPL. Over 145 to 159 the chain is Cytoplasmic; the sequence is GISYIDDFAKEGHSS. Residues 160-180 traverse the membrane as a helical segment; that stretch reads LYLGTVNVMGMTGLVFAFMLG. The Extracellular segment spans residues 181–211; it reads SLFAKMYVDIGYVDLSTIRITPKDSRWVGAW. The chain crosses the membrane as a helical span at residues 212 to 232; sequence WLGFLVSGIVSIISSIPFFFL. Residues 233–292 lie on the Cytoplasmic side of the membrane; that stretch reads PLNPNKPQKERKVSLFLHVLKTNDKRNQIANLTNRRKYITKNVTGFFQSLKSILTNPLYV. Serine 246 is modified (phosphoserine). The chain crosses the membrane as a helical span at residues 293–313; that stretch reads IFVIFTLLHMSSYIASLTYII. Residues 314–329 are Extracellular-facing; the sequence is KMVEQQYGWSASKTNF. The helical transmembrane segment at 330 to 350 threads the bilayer; it reads LLGVLALPAVAIGMFSGGYII. At 351-362 the chain is on the cytoplasmic side; sequence KKFKLSLVGLAK. A helical membrane pass occupies residues 363–383; sequence LAFCSATVHLLSQVLYFFLIC. Residues 384 to 492 are Extracellular-facing; sequence ESKSVAGLTL…CTRKSYVYFV (109 aa). One can recognise a Kazal-like domain in the interval 406-461; that stretch reads DVPLSYCNSECNCDESQWEPVCGNNGITYLSPCLAGCKSSSGNKEPIVFYNCSCVE. 3 disulfide bridges follow: cysteine 412/cysteine 442, cysteine 418/cysteine 438, and cysteine 427/cysteine 459. A helical transmembrane segment spans residues 493–513; that stretch reads IQVLDAFLCAVGLTSYSVLVI. Topologically, residues 514–521 are cytoplasmic; it reads RIVQPELK. Residues 522–542 form a helical membrane-spanning segment; that stretch reads ALAIGFHSMIMRSLGGILVPI. Residues 543–577 lie on the Extracellular side of the membrane; that stretch reads YFGALIDTTCMKWSTNSCGARGACRIYNSTYLGRA. Residues 578–598 form a helical membrane-spanning segment; it reads FFGLKVALIFPVLVLLTVFIF. The Cytoplasmic segment spans residues 599-640; the sequence is VVRKKSHGKDTKVLENERQVMDEANLEFLNDSEHFVPSAEEQ. Serine 636 is subject to Phosphoserine.

Belongs to the organo anion transporter (TC 2.A.60) family.

The protein localises to the cell membrane. This chain is Putative solute carrier organic anion transporter family member 1B7 (SLCO1B7), found in Homo sapiens (Human).